The primary structure comprises 305 residues: NAD kinase 2 (305 aa).

The Proton acceptor role is filled by Asp-78. NAD(+)-binding positions include 78 to 79 (DG), 152 to 153 (NE), Asp-182, 193 to 198 (TAYSLS), and Asn-251.

The protein belongs to the NAD kinase family. A divalent metal cation is required as a cofactor.

The protein localises to the cytoplasm. It catalyses the reaction NAD(+) + ATP = ADP + NADP(+) + H(+). Its function is as follows. Involved in the regulation of the intracellular balance of NAD and NADP, and is a key enzyme in the biosynthesis of NADP. Catalyzes specifically the phosphorylation on 2'-hydroxyl of the adenosine moiety of NAD to yield NADP. The chain is NAD kinase 2 from Trichormus variabilis (strain ATCC 29413 / PCC 7937) (Anabaena variabilis).